The sequence spans 211 residues: Thymidylate kinase (211 aa).

7 to 14 contacts ATP; it reads GIDGCGKT.

The protein belongs to the thymidylate kinase family.

The catalysed reaction is dTMP + ATP = dTDP + ADP. Functionally, phosphorylation of dTMP to form dTDP in both de novo and salvage pathways of dTTP synthesis. This chain is Thymidylate kinase, found in Anaplasma marginale (strain Florida).